The sequence spans 187 residues: Urease accessory protein UreE (187 aa).

The disordered stretch occupies residues 154–187; it reads RANSAQGHGHSHGHSHSHDHHGYHHHGDGNWHKH. The segment covering 162–177 has biased composition (basic residues); sequence GHSHGHSHSHDHHGYH. Over residues 178 to 187 the composition is skewed to basic and acidic residues; that stretch reads HHGDGNWHKH.

Belongs to the UreE family.

Its subcellular location is the cytoplasm. Functionally, involved in urease metallocenter assembly. Binds nickel. Probably functions as a nickel donor during metallocenter assembly. This is Urease accessory protein UreE from Actinobacillus pleuropneumoniae (Haemophilus pleuropneumoniae).